Reading from the N-terminus, the 351-residue chain is Cyanuric acid amidohydrolase (351 aa).

The tract at residues 1–96 is RU A; sequence MPSLRAHVFR…HWTVFARETV (96 aa). Substrate is bound by residues arginine 53 and 77–78; that span reads SG. The RU B stretch occupies residues 103–240; that stretch reads ALAIGVSRTP…HEIIVLGMSA (138 aa). Residue lysine 153 is part of the active site. Substrate contacts are provided by residues arginine 185 and 223–224; that span reads SS. The active-site Nucleophile is serine 223. Positions 246-351 are RU C; that stretch reads LSIDHAVMLD…PVAIIVEKEQ (106 aa). Position 283 (glutamate 283) interacts with Mg(2+). Residues arginine 310 and 329-330 each bind substrate; that span reads SG. The Mg(2+) site is built by alanine 332, glutamine 335, glycine 336, proline 337, and glycine 340.

Belongs to the cyclic amide hydrolase (CyAH) family. Homotetramer.

The catalysed reaction is cyanurate + H2O = 1-carboxybiuret + H(+). Its pathway is xenobiotic degradation; atrazine degradation; biuret from cyanurate: step 1/1. Inhibited by barbituric acid. Functionally, responsible for the hydrolysis of cyanuric acid, an intermediate formed during catabolism of s-triazine based compounds in herbicides such as atrazine and polymers such as melamine. Catalyzes the hydrolytic opening of the s-triazine ring of cyanuric acid (2,4,6-trihydroxy-s-triazine) to yield carbon dioxide and carboxybiuret, which spontaneously decarboxylates to biuret. The polypeptide is Cyanuric acid amidohydrolase (Rhizobium leguminosarum bv. trifolii (strain WSM1325)).